A 283-amino-acid polypeptide reads, in one-letter code: Glutamate racemase (283 aa).

Substrate-binding positions include 28 to 29 (DS) and 60 to 61 (YG). Cys-92 functions as the Proton donor/acceptor in the catalytic mechanism. 93–94 (NT) provides a ligand contact to substrate. Cys-204 (proton donor/acceptor) is an active-site residue. 205–206 (TH) lines the substrate pocket.

Belongs to the aspartate/glutamate racemases family.

It carries out the reaction L-glutamate = D-glutamate. It functions in the pathway cell wall biogenesis; peptidoglycan biosynthesis. Functionally, provides the (R)-glutamate required for cell wall biosynthesis. The polypeptide is Glutamate racemase (Salmonella gallinarum (strain 287/91 / NCTC 13346)).